The following is a 365-amino-acid chain: MTAPADTVHPAGQPDYVAQVATVPFRLGRPEELPGTLDELRAAVSARAGEAVRGLNRPGARTDLAALLAATERTRAALAPVGAGPVGDDPSESEANRDNDLAFGIVRTRGPVAELLVDAALAALAGILEVAVDRGSDLEDAAWQRFIGGFDALLGWLADPHSAPRPATVPGAGPAGPPVHQDALRRWVRGHHVFMVLAQGCALATACLRDSAARGDLPGAEASAAAAEALMRGCQGALLYAGDANREQYNEQIRPTLMPPVAPPKMSGLHWRDHEVLIKELAGSRDAWEWLSAQGSERPATFRAALAETYDSHIGVCGHFVGDQSPSLLAAQGSTRSAVGVIGQFRKIRLSALPEQPATQQGEPS.

Heme is bound at residue 313 to 317 (HIGVC).

It depends on heme as a cofactor.

It catalyses the reaction 3-methyl-L-tyrosine + H2O2 = 5-hydroxy-3-methyl-L-tyrosine + H2O. It participates in antibiotic biosynthesis. Its function is as follows. Heme-containing peroxygenase that mediates the hydroxylation of 3-methyl-L-tyrosine (3-Me-Tyr) into 3-hydroxy-5-methyl-L-tyrosine (3-OH-5-Me-Tyr) in biosynthesis of saframycin A, a potent antitumor antibiotic that belongs to the tetrahydroisoquinoline family. Involved in biosynthesis of 3-hydroxy-5-methyl-O-methyltyrosine (3-OH-5-Me-OMe-Tyr), a core structure of saframycin A. The chain is 3-methyl-L-tyrosine peroxygenase from Streptomyces lavendulae.